The following is a 285-amino-acid chain: MTTLTHRARRTEVGKNSEKKVESEENVNQDRNQDNEDIGDSKDIRLTLMEEVLLLGLKDKEGYTSFWNDCISSGLRGGILIELAMRGRIYLEPPTMRKKRLLDRKVLLKSDSPTGDVLLDETLKHIKATEPTETVQTWIELLTGETWNPFKLQYQLRNVRERIAKNLVEKGILTTEKQNFLLFDMTTHPVTNTTEKQRLVKKLQDSVLERWVNDPQRMDKRTLALLVLAHSSDVLENVFSSLTDDKYDMAMNRAKDLVELDPEVEGTKHSATEMIWAVLAAFNKS.

The interval 1–39 is disordered; that stretch reads MTTLTHRARRTEVGKNSEKKVESEENVNQDRNQDNEDIG. Residues 10–23 show a composition bias toward basic and acidic residues; the sequence is RTEVGKNSEKKVES. Residues Trp-67 and Arg-76 each coordinate a 1,2-diacyl-sn-glycero-3-phospho-(1D-myo-inositol 4-phosphate). Position 112 is a phosphoserine (Ser-112). The a 1,2-diacyl-sn-glycero-3-phospho-(1D-myo-inositol 4-phosphate) site is built by Arg-157 and Arg-160. Residues 176–187 are beta-hairpin required for oligomerization; sequence EKQNFLLFDMTT.

It belongs to the GOLPH3/VPS74 family. Homooligomer. Does not interact MYO18; differs from GOLPH3 by its inability to interact with MYO18. May interact with ARF1.

The protein resides in the golgi apparatus. Its subcellular location is the golgi stack membrane. It localises to the trans-Golgi network membrane. Its function is as follows. Phosphatidylinositol-4-phosphate-binding protein that may antagonize the action of GOLPH3 which is required for the process of vesicle budding at the Golgi and anterograde transport to the plasma membrane. This is Golgi phosphoprotein 3-like (GOLPH3L) from Bos taurus (Bovine).